Here is a 101-residue protein sequence, read N- to C-terminus: Hg-scorpine-like-2 (101 aa).

An N-terminal signal peptide occupies residues 1–17 (MKLTILILLVITSFCSC). The region spanning 60-100 (QQLCMFNKDVAGWCEKSCQQSAHQKGYCHGTKCKCGIPLNY) is the BetaSPN-type CS-alpha/beta domain. Disulfide bonds link Cys-63–Cys-87, Cys-73–Cys-92, and Cys-77–Cys-94.

Belongs to the long chain scorpion toxin family. Class 3 subfamily. As to expression, expressed by the venom gland.

The protein resides in the secreted. In terms of biological role, inhibits voltage-gated potassium channels. This chain is Hg-scorpine-like-2, found in Hoffmannihadrurus gertschi (Scorpion).